The sequence spans 813 residues: Phenylalanine--tRNA ligase beta subunit (813 aa).

The 110-residue stretch at 42-151 folds into the tRNA-binding domain; it reads AKDFNHVVIG…ADAPVGKAYA (110 aa). One can recognise a B5 domain in the interval 405–480; sequence VKKAPVDITI…RLNGYEHIPE (76 aa). The Mg(2+) site is built by D458, D464, E467, and E468. The FDX-ACB domain occupies 720 to 813; that stretch reads SKFPIVERDF…LKKNFDLSVR (94 aa).

Belongs to the phenylalanyl-tRNA synthetase beta subunit family. Type 1 subfamily. As to quaternary structure, tetramer of two alpha and two beta subunits. Mg(2+) is required as a cofactor.

Its subcellular location is the cytoplasm. It catalyses the reaction tRNA(Phe) + L-phenylalanine + ATP = L-phenylalanyl-tRNA(Phe) + AMP + diphosphate + H(+). This chain is Phenylalanine--tRNA ligase beta subunit, found in Bdellovibrio bacteriovorus (strain ATCC 15356 / DSM 50701 / NCIMB 9529 / HD100).